A 419-amino-acid chain; its full sequence is Dynein regulatory complex protein 9 (419 aa).

Disordered regions lie at residues 1 to 47 and 393 to 419; these read MEGE…SPEV and SFKMPKKEKDDSKDAKGKEKDKRRGKK. The segment covering 34–44 has biased composition (acidic residues); sequence EELEEEEEETS. One can recognise an IQ domain in the interval 371 to 400; it reads ELRSIVKLQAWWRGTVVRREIGSFKMPKKE.

Belongs to the DRC9 family. As to quaternary structure, component of the nexin-dynein regulatory complex (N-DRC). Interacts (via IQ domain) with CALM when calcium levels are low. Does not interact with CALM in the presence of Ca(2+). Interacts with the HSP70 proteins HSPA1L and HSPA8. May form a complex with CAMK4 and HSP70.

The protein resides in the cytoplasm. The protein localises to the cell projection. It is found in the cilium. It localises to the flagellum. Its subcellular location is the cytoskeleton. The protein resides in the flagellum axoneme. In terms of biological role, component of the nexin-dynein regulatory complex (N-DRC), a key regulator of ciliary/flagellar motility which maintains the alignment and integrity of the distal axoneme and regulates microtubule sliding in motile axonemes. Binds calmodulin when cellular Ca(2+) levels are low and thereby contributes to the regulation of calcium and calmodulin-dependent protein kinase IV (CAMK4) activity; contributes to the regulation of CAMK4 signaling cascades. Required for normal axoneme assembly in sperm flagella, normal sperm tail formation and for male fertility. In Rattus norvegicus (Rat), this protein is Dynein regulatory complex protein 9 (Iqcg).